A 124-amino-acid chain; its full sequence is MPTIQQLVRKGRTPKVTKTKAPALKANPQQRGVCTRVYTTTPKKPNSALRKVARVKLSNGTEVTAYIPGEGHNLQEHSMVLVRGGRVKDLPGVRYKIVRGALDTQAVKNRKQARSRYGAKMEKK.

Positions 1-30 are disordered; that stretch reads MPTIQQLVRKGRTPKVTKTKAPALKANPQQ. The span at 9–18 shows a compositional bias: basic residues; the sequence is RKGRTPKVTK.

This sequence belongs to the universal ribosomal protein uS12 family. In terms of assembly, part of the 30S ribosomal subunit. Contacts proteins S8 and S17. May interact with IF1 in the 30S initiation complex.

Functionally, with S4 and S5 plays an important role in translational accuracy. Its function is as follows. Interacts with and stabilizes bases of the 16S rRNA that are involved in tRNA selection in the A site and with the mRNA backbone. Located at the interface of the 30S and 50S subunits, it traverses the body of the 30S subunit contacting proteins on the other side and probably holding the rRNA structure together. The combined cluster of proteins S8, S12 and S17 appears to hold together the shoulder and platform of the 30S subunit. The chain is Small ribosomal subunit protein uS12 from Leifsonia xyli subsp. xyli (strain CTCB07).